Here is a 329-residue protein sequence, read N- to C-terminus: GTPase Obg (329 aa).

The 159-residue stretch at 1 to 159 (MQFIDEAKIF…MWVWLHLKLL (159 aa)) folds into the Obg domain. The region spanning 160-327 (SDVGLVGLPN…LLANILSELQ (168 aa)) is the OBG-type G domain. Residues 166–173 (GLPNAGKS), 191–195 (FTTLT), 212–215 (DIPG), 279–282 (TKTD), and 308–310 (SSY) each bind GTP. Mg(2+)-binding residues include Ser-173 and Thr-193.

The protein belongs to the TRAFAC class OBG-HflX-like GTPase superfamily. OBG GTPase family. Monomer. Requires Mg(2+) as cofactor.

It is found in the cytoplasm. An essential GTPase which binds GTP, GDP and possibly (p)ppGpp with moderate affinity, with high nucleotide exchange rates and a fairly low GTP hydrolysis rate. Plays a role in control of the cell cycle, stress response, ribosome biogenesis and in those bacteria that undergo differentiation, in morphogenesis control. This is GTPase Obg from Orientia tsutsugamushi (strain Ikeda) (Rickettsia tsutsugamushi).